Reading from the N-terminus, the 318-residue chain is Ficolin-1-B (318 aa).

Residues M1 to A19 form the signal peptide. One can recognise a Collagen-like domain in the interval G42–G99. Residues I100–P318 form the Fibrinogen C-terminal domain. An intrachain disulfide couples C109 to C137. Residues N205 and N222 are each glycosylated (N-linked (GlcNAc...) asparagine). D253 is a binding site for Ca(2+). N-linked (GlcNAc...) asparagine glycosylation occurs at N254. Ca(2+) contacts are provided by D255 and S257. An intrachain disulfide couples C261 to C274. Position 273–275 (S273–H275) interacts with a carbohydrate. An N-linked (GlcNAc...) asparagine glycan is attached at N287.

Belongs to the ficolin lectin family. As to quaternary structure, homotrimer. May form higher-order oligomers. In terms of processing, N-glycosylated. In terms of tissue distribution, expressed in peripheral blood leukocytes. Also detected at lower levels in spleen and lung.

It is found in the secreted. Functionally, may function in innate immunity through activation of the lectin complement pathway. Binds to GalNAc and GlcNAc carbohydrate moieties. This Xenopus laevis (African clawed frog) protein is Ficolin-1-B.